The primary structure comprises 126 residues: Aspartate 1-decarboxylase (126 aa).

The Schiff-base intermediate with substrate; via pyruvic acid role is filled by S25. S25 is subject to Pyruvic acid (Ser). T57 contacts substrate. Y58 functions as the Proton donor in the catalytic mechanism. 73-75 (GAA) is a substrate binding site.

Belongs to the PanD family. As to quaternary structure, heterooctamer of four alpha and four beta subunits. It depends on pyruvate as a cofactor. Post-translationally, is synthesized initially as an inactive proenzyme, which is activated by self-cleavage at a specific serine bond to produce a beta-subunit with a hydroxyl group at its C-terminus and an alpha-subunit with a pyruvoyl group at its N-terminus.

It is found in the cytoplasm. The enzyme catalyses L-aspartate + H(+) = beta-alanine + CO2. It functions in the pathway cofactor biosynthesis; (R)-pantothenate biosynthesis; beta-alanine from L-aspartate: step 1/1. In terms of biological role, catalyzes the pyruvoyl-dependent decarboxylation of aspartate to produce beta-alanine. In Nitrosococcus oceani (strain ATCC 19707 / BCRC 17464 / JCM 30415 / NCIMB 11848 / C-107), this protein is Aspartate 1-decarboxylase.